Reading from the N-terminus, the 535-residue chain is Large neutral amino acids transporter small subunit 2 (535 aa).

Over residues Met1 to Asn10 the composition is skewed to basic residues. The segment at Met1 to Gly30 is disordered. The Cytoplasmic portion of the chain corresponds to Met1–Ser44. Phosphoserine is present on residues Ser19, Ser28, and Ser29. A helical membrane pass occupies residues Ala45 to Val65. Ile53 contributes to the L-leucine binding site. Over Leu66–Gly73 the chain is Extracellular. The helical transmembrane segment at Leu74–Glu95 threads the bilayer. Over Leu96–Gly116 the chain is Cytoplasmic. The helical transmembrane segment at Leu117 to Pro149 threads the bilayer. Asn134 provides a ligand contact to L-tryptophan. Residues Leu150–Pro157 are Extracellular-facing. The helical transmembrane segment at Asp158 to Ser178 threads the bilayer. The Cytoplasmic portion of the chain corresponds to Ser179–Arg181. A helical transmembrane segment spans residues Trp182–Cys210. Over Lys211–Asp230 the chain is Extracellular. Residues Ile231–Asn252 form a helical membrane-spanning segment. Gly246 is an L-leucine binding site. Topologically, residues Tyr253 to Leu265 are cytoplasmic. Residues Pro266–Tyr287 traverse the membrane as a helical segment. Over Ile288–Gly312 the chain is Extracellular. The chain crosses the membrane as a helical span at residues Val313–Ser338. The Cytoplasmic portion of the chain corresponds to Arg339 to Pro364. The chain crosses the membrane as a helical span at residues Ile365–Ser382. The Extracellular portion of the chain corresponds to Asp383–Thr386. Residues Leu387–Val408 traverse the membrane as a helical segment. Position 395 (Asn395) interacts with L-tryptophan. Over Leu409 to Asn423 the chain is Cytoplasmic. A run of 2 helical transmembrane segments spans residues Leu424 to Pro446 and Val447 to Gly466. At Val467–Pro535 the chain is on the cytoplasmic side. The tract at residues Gly500–Pro535 is disordered. The span at Gly524 to Pro535 shows a compositional bias: basic and acidic residues. Ser529 is subject to Phosphoserine.

This sequence belongs to the amino acid-polyamine-organocation (APC) superfamily. L-type amino acid transporter (LAT) (TC 2.A.3.8) family. In terms of assembly, disulfide-linked heterodimer composed of the catalytic light chain subunit SLC7A8 and the heavy chain subunit SLC3A2. SLC3A2 acts as a chaperone for correct plasma membrane trafficking and stabilization of SLC7A8 and modulates the substrate affinity and specificity of SLC7A8. ICAM-1 associates with the heterodimer SLC3A2/SLC7A8; facilitates leucine uptake. Mainly expressed in kidney and small intestine.

It is found in the cell membrane. The protein localises to the basolateral cell membrane. The catalysed reaction is L-histidine(in) + L-phenylalanine(out) = L-histidine(out) + L-phenylalanine(in). It catalyses the reaction L-tryptophan(in) + L-phenylalanine(out) = L-tryptophan(out) + L-phenylalanine(in). The enzyme catalyses L-isoleucine(in) + L-phenylalanine(out) = L-isoleucine(out) + L-phenylalanine(in). It carries out the reaction L-valine(in) + L-phenylalanine(out) = L-valine(out) + L-phenylalanine(in). The catalysed reaction is L-leucine(in) + L-phenylalanine(out) = L-leucine(out) + L-phenylalanine(in). It catalyses the reaction L-glutamine(in) + L-phenylalanine(out) = L-glutamine(out) + L-phenylalanine(in). The enzyme catalyses L-cysteine(in) + L-phenylalanine(out) = L-cysteine(out) + L-phenylalanine(in). It carries out the reaction L-phenylalanine(out) + L-methionine(in) = L-phenylalanine(in) + L-methionine(out). The catalysed reaction is L-leucine(out) + L-methionine(in) = L-leucine(in) + L-methionine(out). It catalyses the reaction L-cysteine(out) + L-methionine(in) = L-cysteine(in) + L-methionine(out). The enzyme catalyses S-methylmercury-L-cysteine(out) + L-methionine(in) = S-methylmercury-L-cysteine(in) + L-methionine(out). It carries out the reaction S-methylmercury-L-cysteine(in) + L-leucine(out) = S-methylmercury-L-cysteine(out) + L-leucine(in). The catalysed reaction is S-methylmercury-L-cysteine(in) + L-phenylalanine(out) = S-methylmercury-L-cysteine(out) + L-phenylalanine(in). It catalyses the reaction L-phenylalanine(out) + L-serine(in) = L-phenylalanine(in) + L-serine(out). The enzyme catalyses L-phenylalanine(out) + glycine(in) = L-phenylalanine(in) + glycine(out). It carries out the reaction L-phenylalanine(out) + L-alanine(in) = L-phenylalanine(in) + L-alanine(out). The catalysed reaction is 3,3',5-triiodo-L-thyronine(out) = 3,3',5-triiodo-L-thyronine(in). It catalyses the reaction 3,3'-diiodo-L-thyronine(out) = 3,3'-diiodo-L-thyronine(in). The enzyme catalyses L-dopa(out) + L-phenylalanine(in) = L-dopa(in) + L-phenylalanine(out). With respect to regulation, the transporter activity is inhibited by 2-aminobicyclo-(2,2,1)heptane-2-carboxylic acid (BCH) (a specific inhibitor of system L transport). Associates with SLC3A2 to form a functional heterodimeric complex that translocates small and large neutral amino acids with broad specificity and a stoichiometry of 1:1. Functions as amino acid antiporter mediating the influx of extracellular essential amino acids mainly in exchange with the efflux of highly concentrated intracellular amino acids. Has relatively symmetrical selectivities but strongly asymmetrical substrate affinities at both the intracellular and extracellular sides of the transporter. This asymmetry allows SLC7A8 to regulate intracellular amino acid pools (mM concentrations) by exchange with external amino acids (uM concentration range), equilibrating the relative concentrations of different amino acids across the plasma membrane instead of mediating their net uptake. May play an essential role in the reabsorption of neutral amino acids from the epithelial cells to the bloodstream in the kidney. Involved in the uptake of methylmercury (MeHg) when administered as the L-cysteine or D,L-homocysteine complexes, and hence plays a role in metal ion homeostasis and toxicity. Involved in the cellular activity of small molecular weight nitrosothiols, via the stereoselective transport of L-nitrosocysteine (L-CNSO) across the transmembrane. Imports the thyroid hormone diiodothyronine (T2) and to a smaller extent triiodothyronine (T3) but not rT 3 or thyroxine (T4). Mediates the uptake of L-DOPA. May participate in auditory function. This is Large neutral amino acids transporter small subunit 2 from Oryctolagus cuniculus (Rabbit).